The chain runs to 103 residues: Small ribosomal subunit protein uS10 (103 aa).

Belongs to the universal ribosomal protein uS10 family. Part of the 30S ribosomal subunit.

Involved in the binding of tRNA to the ribosomes. This chain is Small ribosomal subunit protein uS10, found in Clostridioides difficile (strain 630) (Peptoclostridium difficile).